The sequence spans 336 residues: 3-isopropylmalate dehydrogenase (336 aa).

Substrate is bound by residues R87, R97, R121, and D211. Positions 211, 235, and 239 each coordinate Mg(2+). Position 271–283 (271–283) interacts with NAD(+); the sequence is GSAPDIAGQGIAD.

Belongs to the isocitrate and isopropylmalate dehydrogenases family. LeuB type 2 subfamily. Homodimer. It depends on Mg(2+) as a cofactor. Mn(2+) is required as a cofactor.

The protein localises to the cytoplasm. The catalysed reaction is (2R,3S)-3-isopropylmalate + NAD(+) = 4-methyl-2-oxopentanoate + CO2 + NADH. It functions in the pathway amino-acid biosynthesis; L-leucine biosynthesis; L-leucine from 3-methyl-2-oxobutanoate: step 3/4. In terms of biological role, catalyzes the oxidation of 3-carboxy-2-hydroxy-4-methylpentanoate (3-isopropylmalate) to 3-carboxy-4-methyl-2-oxopentanoate. The product decarboxylates to 4-methyl-2 oxopentanoate. The chain is 3-isopropylmalate dehydrogenase from Rhodococcus jostii (strain RHA1).